The chain runs to 405 residues: MAVGLGPLPTLHPVAGFELGIASAGIKRPGRKDVVVMRCAEGSTVAGVFTLNAFCAAPVILAKQRVQGPVRYLLTNTGNANAGTGEPGLAAASRTCAKLAELTGVDASAVLPYSTGVIGEPLPVEKIEGALQAALDDLSVDNWAAAATGIMTTDTLPKGASRQFQHDGVTITVTGISKGAGMIRPNMATMLGYIATDAKVSREVLQNLLLDGANKSFNRITIDGDTSTNDCCMLIATGQAKLPEITKAEGPLFAALKQAVFEVCMEVAQAIVRDGEGATKFVTVEVNGGATYQECLDVGYTVAHSPLIKTALFASDPNWGRILAAVGRAGVPDLDVSKIDVFLGEVCIASRGARAASYTEAQGAAVMQQEEITIRIELGRGACSETIWTTDLSHEYVKINAEYRT.

Substrate-binding residues include T152, K178, T189, E276, N400, and T405. The Nucleophile role is filled by T189.

This sequence belongs to the ArgJ family. Heterotetramer of two alpha and two beta chains.

The protein resides in the cytoplasm. It carries out the reaction N(2)-acetyl-L-ornithine + L-glutamate = N-acetyl-L-glutamate + L-ornithine. It catalyses the reaction L-glutamate + acetyl-CoA = N-acetyl-L-glutamate + CoA + H(+). It functions in the pathway amino-acid biosynthesis; L-arginine biosynthesis; L-ornithine and N-acetyl-L-glutamate from L-glutamate and N(2)-acetyl-L-ornithine (cyclic): step 1/1. The protein operates within amino-acid biosynthesis; L-arginine biosynthesis; N(2)-acetyl-L-ornithine from L-glutamate: step 1/4. Functionally, catalyzes two activities which are involved in the cyclic version of arginine biosynthesis: the synthesis of N-acetylglutamate from glutamate and acetyl-CoA as the acetyl donor, and of ornithine by transacetylation between N(2)-acetylornithine and glutamate. This chain is Arginine biosynthesis bifunctional protein ArgJ, found in Pseudomonas fluorescens (strain ATCC BAA-477 / NRRL B-23932 / Pf-5).